The following is a 339-amino-acid chain: Cathepsin L-like peptidase (339 aa).

The N-terminal stretch at 1–16 (MKILILLVAFVAAANA) is a signal peptide. A propeptide spans 17–121 (VSLYELVKEE…VTFIEPANVE (105 aa)) (activation peptide). N95 carries an N-linked (GlcNAc...) asparagine glycan. Cystine bridges form between C143-C186, C177-C219, and C278-C328. C146 is an active-site residue. Active-site residues include H285 and N306.

The protein belongs to the peptidase C1 family. As to quaternary structure, dimer of a heavy and a light chain linked by disulfide bonds. Interacts with cystatin; the interaction results in inhibition of cathepsin L-like peptidase activity. Salivary gland. Midgut.

The catalysed reaction is Specificity close to that of papain. As compared to cathepsin B, cathepsin L exhibits higher activity toward protein substrates, but has little activity on Z-Arg-Arg-NHMec, and no peptidyl-dipeptidase activity.. With respect to regulation, more active in the presence of a reducing agent DTT. Functionally, proteinase exhibiting preference for Leu, Val and Phe residues at the P2 position. This chain is Cathepsin L-like peptidase, found in Aedes aegypti (Yellowfever mosquito).